A 130-amino-acid chain; its full sequence is Annexin A1 (130 aa).

Gln19 participates in a covalent cross-link: Isoglutamyl lysine isopeptide (Gln-Lys) (interchain with K-?). Ser24 carries the post-translational modification Phosphoserine; by PKC. 2 Annexin repeats span residues 37 to 108 and 109 to 130; these read FDPS…ALLK and TPAQ…TDRR. Gly54, Val55, Glu57, Lys92, Leu95, Glu100, Met122, Gly124, Gly126, Thr127, and Arg130 together coordinate Ca(2+).

This sequence belongs to the annexin family.

It localises to the nucleus. It is found in the cytoplasm. The protein localises to the cell projection. Its subcellular location is the cilium. The protein resides in the basolateral cell membrane. It localises to the lateral cell membrane. It is found in the cell membrane. The protein localises to the apical cell membrane. Its subcellular location is the membrane. The protein resides in the early endosome. It localises to the cytoplasmic vesicle membrane. It is found in the endosome membrane. The protein localises to the secreted. Its subcellular location is the extracellular space. The protein resides in the extracellular exosome. It localises to the cytoplasmic vesicle. It is found in the secretory vesicle lumen. The protein localises to the phagocytic cup. Functionally, plays important roles in the innate immune response as effector of glucocorticoid-mediated responses and regulator of the inflammatory process. Has anti-inflammatory activity. Plays a role in glucocorticoid-mediated down-regulation of the early phase of the inflammatory response. Promotes resolution of inflammation and wound healing. Functions at least in part by activating the formyl peptide receptors and downstream signaling cascades. Promotes chemotaxis of granulocytes and monocytes via activation of the formyl peptide receptors. Contributes to the adaptive immune response by enhancing signaling cascades that are triggered by T-cell activation, regulates differentiation and proliferation of activated T-cells. Promotes the differentiation of T-cells into Th1 cells and negatively regulates differentiation into Th2 cells. Has no effect on unstimulated T-cells. Promotes rearrangement of the actin cytoskeleton, cell polarization and cell migration. Negatively regulates hormone exocytosis via activation of the formyl peptide receptors and reorganization of the actin cytoskeleton. Has high affinity for Ca(2+) and can bind up to eight Ca(2+) ions. Displays Ca(2+)-dependent binding to phospholipid membranes. Plays a role in the formation of phagocytic cups and phagosomes. Plays a role in phagocytosis by mediating the Ca(2+)-dependent interaction between phagosomes and the actin cytoskeleton. This Gallus gallus (Chicken) protein is Annexin A1 (ANXA1).